Consider the following 359-residue polypeptide: 3-isopropylmalate dehydrogenase (359 aa).

Residues Arg96, Arg106, Arg134, and Asp223 each coordinate substrate. 3 residues coordinate Mg(2+): Asp223, Asp247, and Asp251. 281–293 (GSAPDIAGQGIAN) provides a ligand contact to NAD(+).

The protein belongs to the isocitrate and isopropylmalate dehydrogenases family. LeuB type 1 subfamily. In terms of assembly, homodimer. Mg(2+) serves as cofactor. It depends on Mn(2+) as a cofactor.

It localises to the cytoplasm. The catalysed reaction is (2R,3S)-3-isopropylmalate + NAD(+) = 4-methyl-2-oxopentanoate + CO2 + NADH. It functions in the pathway amino-acid biosynthesis; L-leucine biosynthesis; L-leucine from 3-methyl-2-oxobutanoate: step 3/4. In terms of biological role, catalyzes the oxidation of 3-carboxy-2-hydroxy-4-methylpentanoate (3-isopropylmalate) to 3-carboxy-4-methyl-2-oxopentanoate. The product decarboxylates to 4-methyl-2 oxopentanoate. The sequence is that of 3-isopropylmalate dehydrogenase from Chromohalobacter salexigens (strain ATCC BAA-138 / DSM 3043 / CIP 106854 / NCIMB 13768 / 1H11).